The chain runs to 254 residues: MRILVTNDDGIHAPGLETLEGIARALSDDVWVVAPETDQSGVSHSLSLNDPLRLRQIGEKRFAVKGTPSDCIIMGVAHILKDHKPDLVLSGVNRGQNVAEDVTYSGTIAGAMEGTILGIRSIALSQAYGAGGRANLKWACAATHGPRVIEKILEIGIEPGILVNVNFPDCEPEDVQGVAVSAQGQRNQALLQIDARHDGRGNPYFWLAFAKARFEPGNGTDLKAIAENRISVTPLRLDLTDEPELTRFAAAFRA.

The a divalent metal cation site is built by aspartate 8, aspartate 9, serine 40, and asparagine 93.

The protein belongs to the SurE nucleotidase family. A divalent metal cation is required as a cofactor.

The protein resides in the cytoplasm. The enzyme catalyses a ribonucleoside 5'-phosphate + H2O = a ribonucleoside + phosphate. Functionally, nucleotidase that shows phosphatase activity on nucleoside 5'-monophosphates. This is 5'-nucleotidase SurE from Methylorubrum extorquens (strain CM4 / NCIMB 13688) (Methylobacterium extorquens).